The primary structure comprises 574 residues: Alpha-farnesene synthase (574 aa).

Mn(2+)-binding residues include aspartate 326, aspartate 330, and glutamate 478. The short motif at aspartate 326 to aspartate 330 is the DDXXD motif element.

This sequence belongs to the terpene synthase family. Tpsd subfamily. Mn(2+) is required as a cofactor.

The protein localises to the cytoplasm. It catalyses the reaction (2E,6E)-farnesyl diphosphate = (3E,6E)-alpha-farnesene + diphosphate. The protein operates within terpene metabolism; oleoresin biosynthesis. Functionally, involved in sesquiterpene (C15) biosynthesis. The major product is alpha-farnesene. The sequence is that of Alpha-farnesene synthase (PT5) from Pinus taeda (Loblolly pine).